A 375-amino-acid polypeptide reads, in one-letter code: 23S rRNA (uracil(747)-C(5))-methyltransferase RlmC (375 aa).

4 residues coordinate [4Fe-4S] cluster: C3, C11, C14, and C87. S-adenosyl-L-methionine contacts are provided by Q212, F241, E262, and N307. C334 serves as the catalytic Nucleophile.

It belongs to the class I-like SAM-binding methyltransferase superfamily. RNA M5U methyltransferase family. RlmC subfamily.

The catalysed reaction is uridine(747) in 23S rRNA + S-adenosyl-L-methionine = 5-methyluridine(747) in 23S rRNA + S-adenosyl-L-homocysteine + H(+). In terms of biological role, catalyzes the formation of 5-methyl-uridine at position 747 (m5U747) in 23S rRNA. The polypeptide is 23S rRNA (uracil(747)-C(5))-methyltransferase RlmC (Escherichia fergusonii (strain ATCC 35469 / DSM 13698 / CCUG 18766 / IAM 14443 / JCM 21226 / LMG 7866 / NBRC 102419 / NCTC 12128 / CDC 0568-73)).